Consider the following 1013-residue polypeptide: Alpha-2-macroglobulin homolog (1013 aa).

Residues 804-844 form a disordered region; that stretch reads AQRGANGERDGLRETVPVRPAGARQLLSGSGSVGADKAGGN.

It belongs to the protease inhibitor I39 (alpha-2-macroglobulin) family. Bacterial alpha-2-macroglobulin subfamily.

The chain is Alpha-2-macroglobulin homolog from Deinococcus radiodurans (strain ATCC 13939 / DSM 20539 / JCM 16871 / CCUG 27074 / LMG 4051 / NBRC 15346 / NCIMB 9279 / VKM B-1422 / R1).